The primary structure comprises 105 residues: Nucleoid-associated protein SE_2306 (105 aa).

Positions 1–40 are disordered; sequence MRGGGNMQQMMKQMQKMQKKMAQEQEKLKEERVAGTAGGG. The span at 7-16 shows a compositional bias: low complexity; sequence MQQMMKQMQK. Basic and acidic residues predominate over residues 21–33; sequence MAQEQEKLKEERV.

The protein belongs to the YbaB/EbfC family. As to quaternary structure, homodimer.

It is found in the cytoplasm. The protein localises to the nucleoid. Binds to DNA and alters its conformation. May be involved in regulation of gene expression, nucleoid organization and DNA protection. The protein is Nucleoid-associated protein SE_2306 of Staphylococcus epidermidis (strain ATCC 12228 / FDA PCI 1200).